A 481-amino-acid polypeptide reads, in one-letter code: Xylulose kinase (481 aa).

Q81–H82 serves as a coordination point for substrate. D239 functions as the Proton acceptor in the catalytic mechanism.

It belongs to the FGGY kinase family.

It catalyses the reaction D-xylulose + ATP = D-xylulose 5-phosphate + ADP + H(+). Its function is as follows. Catalyzes the phosphorylation of D-xylulose to D-xylulose 5-phosphate. The polypeptide is Xylulose kinase (Streptomyces rubiginosus).